A 273-amino-acid polypeptide reads, in one-letter code: Large ribosomal subunit protein uL2 (273 aa).

2 disordered regions span residues 34 to 54 (LEKKSKSGGRNNNGRITTRHI) and 223 to 273 (VAMN…RRRK).

The protein belongs to the universal ribosomal protein uL2 family. As to quaternary structure, part of the 50S ribosomal subunit. Forms a bridge to the 30S subunit in the 70S ribosome.

Functionally, one of the primary rRNA binding proteins. Required for association of the 30S and 50S subunits to form the 70S ribosome, for tRNA binding and peptide bond formation. It has been suggested to have peptidyltransferase activity; this is somewhat controversial. Makes several contacts with the 16S rRNA in the 70S ribosome. This is Large ribosomal subunit protein uL2 from Pseudomonas aeruginosa (strain LESB58).